We begin with the raw amino-acid sequence, 83 residues long: UPF0270 protein CGSHiEE_07180 (83 aa).

Belongs to the UPF0270 family.

This is UPF0270 protein CGSHiEE_07180 from Haemophilus influenzae (strain PittEE).